The primary structure comprises 27 residues: Caerulein precursor fragment R5 (27 aa).

Expressed by the skin glands.

The protein localises to the secreted. In terms of biological role, antimicrobial peptide. The chain is Caerulein precursor fragment R5 from Xenopus ruwenzoriensis (Uganda clawed frog).